A 271-amino-acid chain; its full sequence is Thermoregulatory protein LcrF (271 aa).

The HTH araC/xylS-type domain occupies 167-265 (ERLQKFMEEN…GCTPSQARLT (99 aa)). 2 DNA-binding regions (H-T-H motif) span residues 184–205 (SKFA…GTVY) and 232–255 (IVDI…RRRF).

Functionally, transcriptional activator of the thermally regulated virulent yopE gene. LcrF activity could be modulated by the interaction with an inducer molecule serving as a temperature messenger. The availability of the messenger would in turn be controlled by a temperature-responsive process serving as a cellular thermometer. This Yersinia pestis protein is Thermoregulatory protein LcrF (lcrF).